A 3685-amino-acid chain; its full sequence is Dystrophin (3685 aa).

Residues 1-240 are actin-binding; the sequence is MLWWEEVEDC…YITSLFQVLP (240 aa). Calponin-homology (CH) domains lie at 15-119 and 134-240; these read DVQK…LHWQ and TNSE…QVLP. The segment at 63-72 is ANK2- and ANK-3 binding; that stretch reads PKEKGSTRVH. Spectrin repeat units lie at residues 339–447, 448–556, 559–667, 719–828, 830–934, 943–1045, 1048–1154, 1157–1263, 1266–1367, 1368–1463, 1468–1568, 1571–1676, 1679–1778, 1779–1874, 1877–1979, 1992–2101, 2104–2208, 2211–2318, 2319–2423, 2475–2577, 2580–2686, 2689–2802, 2808–2930, and 2935–3040; these read VNLD…NLHR, VLMD…LLQD, LKWQ…QISQ, EIRK…WLEY, NNII…ELQT, RYQE…KLEE, NKLR…ALKG, EKTV…TLEE, ACWH…LLEQ, SIQS…LFQK, EQRL…QLEK, KLSR…LLLE, KHME…KASI, PLKE…KALE, HQWY…TVRE, EISY…RFDR, EKWR…RLEE, NILS…EIEA, QIKD…LRAK, FNRA…QLNE, KDST…ALEE, RLLQ…HLEA, KRLH…RKID, and RLRE…QLHE. Asn340 carries the phosphothreonine modification. Residues Tyr344 and Leu348 each carry the phosphoserine modification. Phosphothreonine is present on residues Glu519, Ser616, and Ser629. Positions 1415–1913 are interaction with SYNM; it reads SDLTSHEISL…PEPRDERKIK (499 aa). The WW domain maps to 3055-3088; sequence TSVQGPWERAISPNKVPYYINHETQTTCWDHPKM. Residues 3058–3408 form an interaction with SYNM region; sequence QGPWERAISP…TVLEGDNMET (351 aa). The ZZ-type; degenerate zinc finger occupies 3308–3364; that stretch reads KHQAKCNICKECPIIGFRYRSLKHFNYDICQSCFFSGRVAKGHKMHYPMVEYCTPTT. Zn(2+)-binding residues include Cys3313, Cys3316, Cys3337, and Cys3340. The segment at 3466–3518 is binds to SNTB1; the sequence is DDEHLLIQHYCQSLNQDSPLSQPRSPAQILISLESEERGELERILADLEEENR. Phosphoserine is present on residues Ser3483, Ser3490, and Ser3500. Disordered stretches follow at residues 3528–3554 and 3603–3685; these read KQQH…QSPR and EAKV…EDTM. Composition is skewed to polar residues over residues 3607–3626 and 3662–3673; these read NGTT…SSQP and QLNNSFPSSRGR. 6 positions are modified to phosphoserine: Ser3612, Ser3613, Ser3617, Ser3623, Ser3624, and Ser3666.

Interacts with SYNM. Interacts with the syntrophins SNTA1, SNTB1, SNTB2, SNTG1 and SNTG2. Interacts with KRT19. Component of the dystrophin-associated glycoprotein complex which is composed of three subcomplexes: a cytoplasmic complex comprised of DMD (or UTRN), DTNA and a number of syntrophins, such as SNTB1, SNTB2, SNTG1 and SNTG2, the transmembrane dystroglycan complex, and the sarcoglycan-sarcospan complex. Interacts with DAG1 (betaDAG1) with DMD; the interaction is inhibited by phosphorylation on the PPXY motif of DAG1. Interacts with CMYA5. Directly interacts with ANK2 and ANK3; these interactions do not interfere with betaDAG1-binding and are necessary for proper localization in muscle cells. Identified in a dystroglycan complex that contains at least PRX, DRP2, UTRN, DMD and DAG1. Interacts with DTNB. Interacts with PGM5; the interaction is direct. Interacts with NOS1; localizes NOS1 to sarcolemma in muscle cells. As to expression, expressed in muscle fibers accumulating in the costameres of myoplasm at the sarcolemma. Expressed in brain, muscle, kidney, lung and testis. Most tissues contain transcripts of multiple isoforms. Isoform 15: Only isoform to be detected in heart and liver and is also expressed in brain, testis and hepatoma cells.

Its subcellular location is the cell membrane. The protein localises to the sarcolemma. It is found in the cytoplasm. It localises to the cytoskeleton. The protein resides in the postsynaptic cell membrane. Functionally, anchors the extracellular matrix to the cytoskeleton via F-actin. Ligand for dystroglycan. Component of the dystrophin-associated glycoprotein complex which accumulates at the neuromuscular junction (NMJ) and at a variety of synapses in the peripheral and central nervous systems and has a structural function in stabilizing the sarcolemma. Also implicated in signaling events and synaptic transmission. The polypeptide is Dystrophin (Homo sapiens (Human)).